We begin with the raw amino-acid sequence, 476 residues long: Neuropeptide-like precursor 1 (476 aa).

Residues 1 to 34 form the signal peptide; that stretch reads MNDAGASIGRHRGCLLLFVALAVAFSSYVEQVES. Val133 is subject to Valine amide. 2 propeptides span residues 160-232 and 259-476; these read DEAT…NSYF and YVMP…RKNQ. Disordered stretches follow at residues 275–298 and 360–385; these read QNDIDGEKRSVDDDDDDDDDDGEV and PEVESPVDPDDADIPPPPVPAHSHPT. Positions 286-297 are enriched in acidic residues; it reads DDDDDDDDDDGE.

Neuropeptide-like precursor 1-1: Expressed in antennal lobe (AL), corpora cardiaca (CC), corpora allata (CA) and gnathal ganglion (GNG) (at protein level). Expression in AL detected in all animals, in GNG in most animals, expression in CC and CA in few animals (at protein level). Neuropeptide-like precursor 1-2: Expressed in antennal lobe (AL), corpora cardiaca (CC), corpora allata (CA) and gnathal ganglion (GNG) (at protein level). Expression in AL detected in all animals, in GNG in some animals, expression in CC and CA in few animals (at protein level). Neuropeptide-like precursor 1-3: Not expressed in antennal lobe (AL), corpora cardiaca (CC), corpora allata (CA) and gnathal ganglion (GNG) (at protein level). Neuropeptide-like precursor 1-4: Expressed in antennal lobe (AL) and gnathal ganglion (GNG) (at protein level). Expression in AL detected in most animals, in GNG in some animals (at protein level). Not expressed in CC and CA (at protein level). YRVamide: Expressed in antennal lobe (AL), corpora cardiaca (CC), corpora allata (CA) and gnathal ganglion (GNG) (at protein level). Expression in AL and GNG detected in most animals, expression in CC and CA in few animals (at protein level). Extended YRVamide: Expressed in antennal lobe (AL) and gnathal ganglion (GNG) (at protein level). Expression in AL detected in most animals, in GNG in some animals (at protein level). Not expressed in corpora cardiaca (CC) and corpora allata (CA) (at protein level). Neuropeptide-like precursor 1-6: Expressed in antennal lobe (AL), corpora cardiaca (CC), corpora allata (CA) and gnathal ganglion (GNG) (at protein level). Expression in GNG detected in all animals, expression in AL in most animals, in CC and CA in few animals (at protein level). Neuropeptide-like precursor 1-6(1-11): Expressed in antennal lobe (AL) and gnathal ganglion (GNG) in most animals (at protein level). Not expressed in corpora cardiaca (CC) and corpora allata (CA) (at protein level). Neuropeptide-like precursor 1-9: Expressed in antennal lobe (AL) and gnathal ganglion (GNG) (at protein level). Expression in AL detected in all animals in GNG in most (at protein level). Not expressed in corpora cardiaca (CC) and corpora allata (CA) (at protein level).

Its subcellular location is the secreted. The sequence is that of Neuropeptide-like precursor 1 from Agrotis ipsilon (Black cutworm moth).